The chain runs to 65 residues: Large ribosomal subunit protein bL35 (65 aa).

It belongs to the bacterial ribosomal protein bL35 family.

The chain is Large ribosomal subunit protein bL35 from Phytoplasma australiense.